The following is a 1309-amino-acid chain: Disease resistance protein RPP2A (1309 aa).

The region spanning 9–173 (RRYDVFPSFS…MVADDVSKKL (165 aa)) is the TIR 1 domain. The active site involves Glu-84. An NB-ARC 1 domain is found at 187–418 (EAHLEAMSSI…FKKTLRNYLP (232 aa)). The ALOG domain occupies 488–585 (PNRRHSNDDW…KECILVFSCH (98 aa)). Residues 574–737 (REKECILVFS…EVVRNASLRL (164 aa)) form the TIR 2 domain. The NB-ARC 2 domain maps to 755-987 (SQSTDVEIMG…IFLDLACFFR (233 aa)). Positions 1114-1141 (LPHGLDTLPDELSLLHWENYPLVYLPQK) form a coiled coil. 6 LRR repeats span residues 1145–1167 (VNLV…KKNL), 1168–1195 (EKLK…NLEH), 1214–1237 (CGKL…MVDL), 1238–1258 (TTLK…QDFA), 1259–1283 (PNLE…NLTE), and 1285–1307 (VTLD…EIIR).

Belongs to the disease resistance TIR-NB-LRR family.

It catalyses the reaction NAD(+) + H2O = ADP-D-ribose + nicotinamide + H(+). In terms of biological role, disease resistance protein that cooperates with RPP2B to confer resistance to Hyaloperonospora parasitica isolate Cala2. This is Disease resistance protein RPP2A from Arabidopsis thaliana (Mouse-ear cress).